A 740-amino-acid polypeptide reads, in one-letter code: Zn(2)-C6 fungal-type transcription factor mpsB (740 aa).

A DNA-binding region (zn(2)-C6 fungal-type) is located at residues 25–46 (RLKCDRNQPCSTCSHRGLSFSC). A disordered region spans residues 625-645 (SISTPSHDQDDLDGEAATEAT).

It is found in the nucleus. Functionally, transcription factor; part of the gene cluster that mediates the biosynthesis of macrophasetins, 3-decalinoyltetramic acids (DTAs) which feature a tetramate (pyrrolidine-2,4-dione) unit connected to a decalin fragment and that have potent bioactivities. The chain is Zn(2)-C6 fungal-type transcription factor mpsB from Macrophomina phaseolina (strain MS6) (Charcoal rot fungus).